We begin with the raw amino-acid sequence, 147 residues long: Globin, major monomeric component (147 aa).

One can recognise a Globin domain in the interval 1 to 146; the sequence is GLSAAQRQVI…ISGALISGLQ (146 aa). Histidine 90 lines the heme b pocket.

The protein belongs to the globin family. As to quaternary structure, monomer.

This Glycera dibranchiata (Bloodworm) protein is Globin, major monomeric component.